A 187-amino-acid chain; its full sequence is MASTADFKNGLVLQIDGQLWQIVEFQHVKPGKGPAFVRTKLKNVVSGKVVDKTYNAGVKVETATVDRRDATYLYRDGSDFVFMDSEDYEQHPLPEALVGRAADFLLESMPVQIAFHDGSPLYLELPVTVELVVASTEPGLQGDRSSAGTKPATLETGAEIQVPLFINTGDKLKVDSRDGSYLGRVNA.

Belongs to the elongation factor P family.

It is found in the cytoplasm. The protein operates within protein biosynthesis; polypeptide chain elongation. Its function is as follows. Involved in peptide bond synthesis. Stimulates efficient translation and peptide-bond synthesis on native or reconstituted 70S ribosomes in vitro. Probably functions indirectly by altering the affinity of the ribosome for aminoacyl-tRNA, thus increasing their reactivity as acceptors for peptidyl transferase. In Mycolicibacterium vanbaalenii (strain DSM 7251 / JCM 13017 / BCRC 16820 / KCTC 9966 / NRRL B-24157 / PYR-1) (Mycobacterium vanbaalenii), this protein is Elongation factor P.